The sequence spans 217 residues: tRNA (guanine-N(7)-)-methyltransferase (217 aa).

Residues E56, E81, D108, and D130 each contribute to the S-adenosyl-L-methionine site. Residue D130 is part of the active site. The substrate site is built by K134 and D166.

This sequence belongs to the class I-like SAM-binding methyltransferase superfamily. TrmB family.

The enzyme catalyses guanosine(46) in tRNA + S-adenosyl-L-methionine = N(7)-methylguanosine(46) in tRNA + S-adenosyl-L-homocysteine. It participates in tRNA modification; N(7)-methylguanine-tRNA biosynthesis. Its function is as follows. Catalyzes the formation of N(7)-methylguanine at position 46 (m7G46) in tRNA. This chain is tRNA (guanine-N(7)-)-methyltransferase, found in Neorickettsia sennetsu (strain ATCC VR-367 / Miyayama) (Ehrlichia sennetsu).